A 253-amino-acid chain; its full sequence is Cholesterol ring-cleaving hydrolase IpdB subunit (253 aa).

The protein belongs to the 3-oxoacid CoA-transferase subunit B family. As to quaternary structure, heterotetramer composed of 2 IpdA subunits and 2 IpdB subunits.

It carries out the reaction (3E)-2-(2-carboxylatoethyl)-3-methyl-6-oxocyclohex-1-ene-1-carboxyl-CoA + H2O = 6-methyl-3,7-dioxodecanedioyl-CoA. The protein operates within steroid metabolism; cholesterol degradation. In terms of biological role, involved in the final steps of cholesterol and steroid degradation. Opens the last steroid ring of cholesterol by catalyzing the hydrolysis of (3E)-2-(2-carboxylatoethyl)-3-methyl-6-oxocyclohex-1-ene-1-carboxyl-CoA (COCHEA-CoA) to 6-methyl-3,7-dioxodecanedioyl-CoA (MeDODA-CoA). The chain is Cholesterol ring-cleaving hydrolase IpdB subunit from Rhodococcus jostii (strain RHA1).